The chain runs to 237 residues: MMVYIMNAFDIKSTKMDVLSISLHTSDLFDLEDVLVKLGKKFQESGVVPFVLDVQEFDYPESLDLAALVSLFSRHGMQILGLKHSNERWAAVAMKYHLLFCLSHSENVKELGQVEVQKTEDGQKARKTVLITSPVRTGQQVYAEDGDLIVTGAVNQGAELIADGNMHIYAPMRGRALAGAKGDTSARIFIHSMQAELVSVAGIYRNFEQDLPDHLHKQPVQILLQDNRLVISAIGSE.

The protein belongs to the MinC family. As to quaternary structure, interacts with MinD and FtsZ.

Its function is as follows. Cell division inhibitor that blocks the formation of polar Z ring septums. Rapidly oscillates between the poles of the cell to destabilize FtsZ filaments that have formed before they mature into polar Z rings. Prevents FtsZ polymerization. The chain is Probable septum site-determining protein MinC from Neisseria gonorrhoeae.